We begin with the raw amino-acid sequence, 501 residues long: Dihydrolipoyl dehydrogenase, mitochondrial (501 aa).

The N-terminal 31 residues, 1–31, are a transit peptide targeting the mitochondrion; that stretch reads MAMANLARRKGYSLLSSETLRYSFSLRSRAF. Residues 67-76, Lys-85, Gly-149, and 178-180 contribute to the FAD site; these read EKRGALGGTC and TGS. An intrachain disulfide couples Cys-76 to Cys-81. Residues 215–222, Glu-238, Val-272, and Gly-307 each bind NAD(+); that span reads GAGYIGLE. Residues Asp-348 and 354-357 contribute to the FAD site; that span reads MLAH. The active-site Proton acceptor is the His-480.

This sequence belongs to the class-I pyridine nucleotide-disulfide oxidoreductase family. As to quaternary structure, homodimer. Requires FAD as cofactor.

The protein localises to the mitochondrion matrix. The enzyme catalyses N(6)-[(R)-dihydrolipoyl]-L-lysyl-[protein] + NAD(+) = N(6)-[(R)-lipoyl]-L-lysyl-[protein] + NADH + H(+). Its function is as follows. Lipoamide dehydrogenase is a component of the glycine cleavage system as well as of the alpha-ketoacid dehydrogenase complexes. The pyruvate dehydrogenase complex contains multiple copies of three enzymatic components: pyruvate dehydrogenase (E1), dihydrolipoamide acetyltransferase (E2) and lipoamide dehydrogenase (E3). The polypeptide is Dihydrolipoyl dehydrogenase, mitochondrial (LPD) (Pisum sativum (Garden pea)).